The chain runs to 643 residues: RNA-binding protein RO60 (643 aa).

The region spanning 63 to 473 is the TROVE domain; it reads VENNAGGFVF…AFVNAPPTGK (411 aa). The interval 186–390 is RNA-binding; it reads RTPTHLFEFV…SMPMTAMIRN (205 aa). A VWFA-like domain region spans residues 465–643; sequence FVNAPPTGKR…IVHEFVTGKI (179 aa). The a divalent metal cation site is built by Ser-482, Ser-484, and Thr-549.

It belongs to the Ro 60 kDa family.

It is found in the cytoplasm. Its function is as follows. RNA-binding protein that binds to misfolded non-coding RNAs, pre-5S rRNA, and several small cytoplasmic RNA molecules known as Y RNAs. The polypeptide is RNA-binding protein RO60 (Caenorhabditis elegans).